The primary structure comprises 262 residues: ClpXP adapter protein SpxH (262 aa).

The protein belongs to the SpxH family. As to quaternary structure, interacts with Spx.

The protein resides in the cytoplasm. In terms of biological role, adapter protein required for efficient degradation of Spx by ClpXP under non-stress conditions. Interaction with Spx stabilizes Spx and exposes the C-terminus of Spx for recognition and proteolysis by ClpXP. This Staphylococcus saprophyticus subsp. saprophyticus (strain ATCC 15305 / DSM 20229 / NCIMB 8711 / NCTC 7292 / S-41) protein is ClpXP adapter protein SpxH.